A 417-amino-acid polypeptide reads, in one-letter code: 3-isopropylmalate dehydratase large subunit (417 aa).

Residues cysteine 298, cysteine 358, and cysteine 361 each coordinate [4Fe-4S] cluster.

This sequence belongs to the aconitase/IPM isomerase family. LeuC type 2 subfamily. Heterodimer of LeuC and LeuD. [4Fe-4S] cluster is required as a cofactor.

It carries out the reaction (2R,3S)-3-isopropylmalate = (2S)-2-isopropylmalate. Its pathway is amino-acid biosynthesis; L-leucine biosynthesis; L-leucine from 3-methyl-2-oxobutanoate: step 2/4. Functionally, catalyzes the isomerization between 2-isopropylmalate and 3-isopropylmalate, via the formation of 2-isopropylmaleate. This chain is 3-isopropylmalate dehydratase large subunit, found in Thermoanaerobacter pseudethanolicus (strain ATCC 33223 / 39E) (Clostridium thermohydrosulfuricum).